The primary structure comprises 504 residues: Cytochrome P450 monooxygenase gliF (504 aa).

The helical transmembrane segment at 13–31 (AVAVSFGVGLLYWVYRLLL) threads the bilayer. N-linked (GlcNAc...) asparagine glycosylation is found at Asn197 and Asn299. Heme is bound at residue Cys449.

It belongs to the cytochrome P450 family. It depends on heme as a cofactor.

It is found in the membrane. It functions in the pathway mycotoxin biosynthesis. Functionally, cytochrome P450 monooxygenase; part of the gene cluster that mediates the biosynthesis of gliotoxin, a member of the epipolythiodioxopiperazine (ETP) class of toxins characterized by a disulfide bridged cyclic dipeptide. The first step in gliotoxin biosynthesis is the condensation of serine and phenylalanine to form the cyclo-L-phenylalanyl-L-serine diketopiperazine (DKP) by the NRPS gliP. GliP is also able to produce the DKP cyclo-L-tryptophanyl-L-serine, suggesting that the substrate specificity of the first adenylation (A) domain in gliP is sufficiently relaxed to accommodate both L-Phe and L-Trp. The cytochrome P450 monooxygenase gliC has been shown to catalyze the subsequent hydroxylation of the alpha-carbon of L-Phe in cyclo-L-phenylalanyl-L-serine whereas the second cytochrome P450 enzyme, gliF, is presumably involved in the modification of the DKP side chain. The glutathione S-transferase (GST) gliG then forms a bis-glutathionylated biosynthetic intermediate which is responsible for the sulfurization of gliotoxin. This bis-glutathionylated intermediate is subsequently processed by the gamma-glutamyl cyclotransferase gliK to remove both gamma-glutamyl moieties. Subsequent processing via gliI yields a biosynthetic intermediate, which is N-methylated via the N-methyltransferase gliN, before the gliotoxin oxidoreductase gliT-mediated disulfide bridge closure. GliN-mediated amide methylation confers stability to ETP, damping the spontaneous formation of tri- and tetrasulfides. Intracellular dithiol gliotoxin oxidized by gliT is subsequently effluxed by gliA. Gliotoxin contributes to pathogenesis during invasive aspergillosis. In macrophages and neutrophils, gliotoxin showed inhibition of various different cell functions including cytokine production, antigen presentation, phagocytosis, and production of reactive oxygen species. In Aspergillus fumigatus (strain ATCC MYA-4609 / CBS 101355 / FGSC A1100 / Af293) (Neosartorya fumigata), this protein is Cytochrome P450 monooxygenase gliF.